The chain runs to 308 residues: Microtubule integrity protein mal3 (308 aa).

The 102-residue stretch at S2–D103 folds into the Calponin-homology (CH) domain. The segment at R117–V162 is disordered. The span at S144–V162 shows a compositional bias: low complexity. The EB1 C-terminal domain maps to R173–L247.

This sequence belongs to the MAPRE family. In terms of assembly, interacts with tea2.

The protein localises to the cytoplasm. It is found in the cytoskeleton. Functionally, may play a role in regulating the integrity of microtubules possibly by influencing their stability. Involved in an anchoring mechanism to maintain tea2 and tip1 at growing microtubule ends. Strongly stimulates the ATPase activity of tea2. In Schizosaccharomyces pombe (strain 972 / ATCC 24843) (Fission yeast), this protein is Microtubule integrity protein mal3 (mal3).